Consider the following 162-residue polypeptide: Transcription elongation factor GreA (162 aa).

Positions 9–38 (QGYKALEEELARLKSERPEIIQAIKEAREE) form a coiled coil.

This sequence belongs to the GreA/GreB family.

Functionally, necessary for efficient RNA polymerase transcription elongation past template-encoded arresting sites. The arresting sites in DNA have the property of trapping a certain fraction of elongating RNA polymerases that pass through, resulting in locked ternary complexes. Cleavage of the nascent transcript by cleavage factors such as GreA or GreB allows the resumption of elongation from the new 3'terminus. GreA releases sequences of 2 to 3 nucleotides. The polypeptide is Transcription elongation factor GreA (Desulfovibrio desulfuricans (strain ATCC 27774 / DSM 6949 / MB)).